A 623-amino-acid polypeptide reads, in one-letter code: Glutathione import ATP-binding protein GsiA (623 aa).

ABC transporter domains follow at residues 15–269 and 314–564; these read VENL…RALL and LRVR…RKLL. ATP-binding positions include 49–56 and 357–364; these read GESGSGKS.

Belongs to the ABC transporter superfamily. Glutathione importer (TC 3.A.1.5.11) family. As to quaternary structure, the complex is composed of two ATP-binding proteins (GsiA), two transmembrane proteins (GsiC and GsiD) and a solute-binding protein (GsiB).

The protein resides in the cell inner membrane. It catalyses the reaction glutathione(out) + ATP + H2O = glutathione(in) + ADP + phosphate + H(+). Its function is as follows. Part of the ABC transporter complex GsiABCD involved in glutathione import. Responsible for energy coupling to the transport system. The protein is Glutathione import ATP-binding protein GsiA of Shigella boydii serotype 4 (strain Sb227).